Consider the following 185-residue polypeptide: MKFIAAVLLVALLCPKDSTSLASRLSGLLGGDGILGGSGLLGGLGKIPLGGRLLGGRPDDVLREDDVLGEVGGRPDDVLGEVGGRPDDVLGEVGGRPDDGLGELGGGPNRLFGGSRLFGGVEKVVAGIPLPNVADVAGGLPVALPVSVRRRRALGVVGGLPVPKLPGVAGGLPVPKLPVPLPVNL.

Positions 1–20 are cleaved as a signal peptide; sequence MKFIAAVLLVALLCPKDSTS. Residues 21 to 148 constitute a propeptide that is removed on maturation; that stretch reads LASRLSGLLG…GLPVALPVSV (128 aa).

Expressed by the mandibular venom gland.

The protein localises to the secreted. In terms of biological role, has a hypotensive activity. The protein is Celestoxin of Caribicus warreni (Haitian giant galliwasp).